The following is a 406-amino-acid chain: B3 domain-containing protein Os11g0197600 (406 aa).

A disordered region spans residues 1-20 (MVVREKQGGRMGKGKGKGKE). The TF-B3 1 DNA-binding region spans 30–123 (RSFFRVLLTL…QFSVTVFEPS (94 aa)). The segment at 199–245 (ESSRRKRAGASAGKSKVTSTSHNSTRGSSCSSDEDNSSSKSPNPPFL) is disordered. Polar residues predominate over residues 214–225 (KVTSTSHNSTRG). A DNA-binding region (TF-B3 2) is located at residues 298–393 (AVQIMMESYV…NIKVHIYRVV (96 aa)).

The protein resides in the nucleus. This chain is B3 domain-containing protein Os11g0197600, found in Oryza sativa subsp. japonica (Rice).